Consider the following 296-residue polypeptide: 4-hydroxy-tetrahydrodipicolinate synthase (296 aa).

Thr-44 serves as a coordination point for pyruvate. Residue Tyr-132 is the Proton donor/acceptor of the active site. Lys-162 functions as the Schiff-base intermediate with substrate in the catalytic mechanism. Ile-204 provides a ligand contact to pyruvate.

It belongs to the DapA family. In terms of assembly, homotetramer; dimer of dimers.

The protein resides in the cytoplasm. It carries out the reaction L-aspartate 4-semialdehyde + pyruvate = (2S,4S)-4-hydroxy-2,3,4,5-tetrahydrodipicolinate + H2O + H(+). The protein operates within amino-acid biosynthesis; L-lysine biosynthesis via DAP pathway; (S)-tetrahydrodipicolinate from L-aspartate: step 3/4. Catalyzes the condensation of (S)-aspartate-beta-semialdehyde [(S)-ASA] and pyruvate to 4-hydroxy-tetrahydrodipicolinate (HTPA). This Novosphingobium aromaticivorans (strain ATCC 700278 / DSM 12444 / CCUG 56034 / CIP 105152 / NBRC 16084 / F199) protein is 4-hydroxy-tetrahydrodipicolinate synthase.